The primary structure comprises 334 residues: Protein-glutamate methylesterase/protein-glutamine glutaminase 1 (334 aa).

The Response regulatory domain maps to 2 to 120 (NIGIVNDLPL…GAAGDTTKLL (119 aa)). The residue at position 53 (aspartate 53) is a 4-aspartylphosphate. The CheB-type methylesterase domain occupies 145 to 334 (RAGGGPLIAI…AGELAALARI (190 aa)). Active-site residues include serine 157, histidine 184, and aspartate 277.

It belongs to the CheB family. In terms of processing, phosphorylated by CheA. Phosphorylation of the N-terminal regulatory domain activates the methylesterase activity.

It localises to the cytoplasm. The enzyme catalyses [protein]-L-glutamate 5-O-methyl ester + H2O = L-glutamyl-[protein] + methanol + H(+). The catalysed reaction is L-glutaminyl-[protein] + H2O = L-glutamyl-[protein] + NH4(+). Involved in chemotaxis. Part of a chemotaxis signal transduction system that modulates chemotaxis in response to various stimuli. Catalyzes the demethylation of specific methylglutamate residues introduced into the chemoreceptors (methyl-accepting chemotaxis proteins or MCP) by CheR. Also mediates the irreversible deamidation of specific glutamine residues to glutamic acid. This Burkholderia lata (strain ATCC 17760 / DSM 23089 / LMG 22485 / NCIMB 9086 / R18194 / 383) protein is Protein-glutamate methylesterase/protein-glutamine glutaminase 1.